The sequence spans 301 residues: Recombination-associated protein RdgC (301 aa).

It belongs to the RdgC family.

The protein localises to the cytoplasm. Its subcellular location is the nucleoid. Its function is as follows. May be involved in recombination. The sequence is that of Recombination-associated protein RdgC from Xanthomonas oryzae pv. oryzae (strain MAFF 311018).